Here is a 495-residue protein sequence, read N- to C-terminus: Nuclear receptor subfamily 6 group A member 1 (495 aa).

The disordered stretch occupies residues 1 to 34; it reads MERDERPPSGGGGGGGSAGFLEPPAALPPPPRNG. Residues 9 to 18 show a composition bias toward gly residues; the sequence is SGGGGGGGSA. Positions 72 to 147 form a DNA-binding region, nuclear receptor; that stretch reads QRTCLICGDR…MGMNRKAIRE (76 aa). Positions 75, 78, 92, 95, 111, 117, 127, and 130 each coordinate Zn(2+). NR C4-type zinc fingers lie at residues 75 to 95 and 111 to 135; these read CLIC…CEGC and CSRD…LLKC. Disordered stretches follow at residues 145 to 165 and 177 to 214; these read IRED…QISE and FEEE…LSSS. Over residues 180-192 the composition is skewed to basic and acidic residues; sequence EANHWSNHGDSDH. Residues 187–268 form a sufficient for interaction with UIMC1 region; the sequence is HGDSDHSSPG…RSLDPQSYSL (82 aa). Low complexity predominate over residues 202 to 214; that stretch reads SNQPSPGSTLSSS. Residues 264 to 495 enclose the NR LBD domain; the sequence is QSYSLIHQLM…HSCKTSTVKE (232 aa).

Belongs to the nuclear hormone receptor family. NR6 subfamily. As to quaternary structure, homodimer. Interacts with UIMC1. In terms of tissue distribution, expressed in the germ cells of both the adult testis and ovary, being most abundant in spermatids.

The protein localises to the nucleus. Orphan nuclear receptor that binds to a response element containing the sequence 5'-TCAAGGTCA-3'. Acts as a regulator of embryonic stem cell pluripotency by mediating repression of POU5F1/OCT4: binds to the DR0 element within the POU5F1/OCT4 promoter and inhibits POU5F1/OCT4 expression during embryonic stem cell differentiation. Required to restrict POU5F1/OCT4 expression to the germ cell lineage. Involved in the regulation of gene expression in germ cell development during gametogenesis. The polypeptide is Nuclear receptor subfamily 6 group A member 1 (Nr6a1) (Mus musculus (Mouse)).